A 181-amino-acid polypeptide reads, in one-letter code: NAD(P)H-quinone oxidoreductase subunit 6, chloroplastic (181 aa).

Helical transmembrane passes span 13 to 33 (PILY…VFFG), 35 to 55 (IIYS…LYLL), 64 to 84 (AQIL…IMLI), 98 to 118 (FGDI…IIMI), and 152 to 172 (LLPF…AITI).

It belongs to the complex I subunit 6 family. In terms of assembly, NDH is composed of at least 16 different subunits, 5 of which are encoded in the nucleus.

Its subcellular location is the plastid. The protein localises to the chloroplast thylakoid membrane. The enzyme catalyses a plastoquinone + NADH + (n+1) H(+)(in) = a plastoquinol + NAD(+) + n H(+)(out). It catalyses the reaction a plastoquinone + NADPH + (n+1) H(+)(in) = a plastoquinol + NADP(+) + n H(+)(out). Its function is as follows. NDH shuttles electrons from NAD(P)H:plastoquinone, via FMN and iron-sulfur (Fe-S) centers, to quinones in the photosynthetic chain and possibly in a chloroplast respiratory chain. The immediate electron acceptor for the enzyme in this species is believed to be plastoquinone. Couples the redox reaction to proton translocation, and thus conserves the redox energy in a proton gradient. This is NAD(P)H-quinone oxidoreductase subunit 6, chloroplastic (ndhG) from Staurastrum punctulatum (Green alga).